The chain runs to 348 residues: Phosphoribosylformylglycinamidine cyclo-ligase (348 aa).

Belongs to the AIR synthase family.

The protein resides in the cytoplasm. It carries out the reaction 2-formamido-N(1)-(5-O-phospho-beta-D-ribosyl)acetamidine + ATP = 5-amino-1-(5-phospho-beta-D-ribosyl)imidazole + ADP + phosphate + H(+). The protein operates within purine metabolism; IMP biosynthesis via de novo pathway; 5-amino-1-(5-phospho-D-ribosyl)imidazole from N(2)-formyl-N(1)-(5-phospho-D-ribosyl)glycinamide: step 2/2. The polypeptide is Phosphoribosylformylglycinamidine cyclo-ligase (Geotalea uraniireducens (strain Rf4) (Geobacter uraniireducens)).